A 315-amino-acid polypeptide reads, in one-letter code: DNA-directed RNA polymerase subunit alpha (315 aa).

Residues 1–228 (MLEIEKPVIQ…EHFKLFMTLT (228 aa)) form an alpha N-terminal domain (alpha-NTD) region. The alpha C-terminal domain (alpha-CTD) stretch occupies residues 245–315 (KEKALEMTIE…LGLNLRLNDE (71 aa)).

The protein belongs to the RNA polymerase alpha chain family. In terms of assembly, homodimer. The RNAP catalytic core consists of 2 alpha, 1 beta, 1 beta' and 1 omega subunit. When a sigma factor is associated with the core the holoenzyme is formed, which can initiate transcription.

The catalysed reaction is RNA(n) + a ribonucleoside 5'-triphosphate = RNA(n+1) + diphosphate. DNA-dependent RNA polymerase catalyzes the transcription of DNA into RNA using the four ribonucleoside triphosphates as substrates. This Clostridium perfringens (strain ATCC 13124 / DSM 756 / JCM 1290 / NCIMB 6125 / NCTC 8237 / Type A) protein is DNA-directed RNA polymerase subunit alpha.